Here is a 910-residue protein sequence, read N- to C-terminus: Translation factor GUF1 homolog, mitochondrial (910 aa).

The tract at residues 126–188 is disordered; it reads RRGNGLPFER…DGGGAPEHPQ (63 aa). The 178-residue stretch at 189-366 folds into the tr-type G domain; that stretch reads QNVRNFCILA…RIVSDIPCPA (178 aa). GTP-binding positions include 198–205, 259–263, and 313–316; these read AHIDSGKS, DTPGH, and NKID. The tract at residues 639–683 is disordered; it reads GSGDGRADGSADGSADGSADGSGDSSAHGSSDRRGAGCARGSDDI. Residues 646–667 are compositionally biased toward low complexity; sequence DGSADGSADGSADGSGDSSAHG.

Belongs to the TRAFAC class translation factor GTPase superfamily. Classic translation factor GTPase family. LepA subfamily.

The protein resides in the mitochondrion inner membrane. It carries out the reaction GTP + H2O = GDP + phosphate + H(+). In terms of biological role, promotes mitochondrial protein synthesis. May act as a fidelity factor of the translation reaction, by catalyzing a one-codon backward translocation of tRNAs on improperly translocated ribosomes. Binds to mitochondrial ribosomes in a GTP-dependent manner. This is Translation factor GUF1 homolog, mitochondrial from Plasmodium vivax (strain Salvador I).